The following is a 476-amino-acid chain: E1B 55 kDa protein (476 aa).

2 disordered regions span residues methionine 1–serine 20 and phenylalanine 42–asparagine 95. A phosphoserine mark is found at serine 472 and serine 473.

Belongs to the adenoviridae E1B 55 kDa protein family. As to quaternary structure, interacts with host PML-4 and PML-5; this interaction promotes efficient subnuclear targeting of E1B-55K to PML nuclear bodies. Interacts with E4-ORF3 protein. Interacts with E4-ORF6 protein.

The protein resides in the host nucleus. It is found in the host cytoplasm. In terms of biological role, plays a major role to prevent cellular inhibition of viral genome replication. Assembles an SCF-like E3 ubiquitin ligase complex based on the cellular proteins ELOB, ELOC, CUL5 and RBX1, in cooperation with viral E4orf6. This viral RING-type ligase ubiquitinates cellular substrates and targets them to proteasomal degradation: TP53/p53, LIG4, MRE11-RAD50-NBS1 (MRN) complex, ITGA3, DAXX and BLM. E1B-55K probably acts as the substrate-specific adapter of the SCF-like E3 ubiquitin ligase complex. Degradation of host TP53/p53 activity is essential for preventing E1A-induced TP53 accumulation that would otherwise lead to cell apoptosis and growth arrest. E1B-55K also inactivates TP53 transcription-factor activity by binding its transactivation domain. E1B-55K also functions as a SUMO1 E3 ligase for TP53 which causes the latter to be sequestered in promyelocytic leukemia (PML) nuclear bodies thereby contributing to maximal inhibition of TP53 function. The sequence is that of E1B 55 kDa protein from Human adenovirus F serotype 40 (HAdV-40).